We begin with the raw amino-acid sequence, 509 residues long: MTAATEQKEKTGTDNVGRVVRVTGPVVDVEFPRGSVPELFNALHAEISYKDLAKTLTLEVAQHLGDSLVRCISMQPTDGLVRGVDVTDTGASISVPVGEGVKGHVFNALGACLDDPGYGKDFEKWSIHRKPPAFDELEPRTEMLETGLKVVDLLTPYVRGGKIALFGGAGVGKTVLIQEMINRIARNFGGTSVFAGVGERTREGNDLWVELADANVLKDTALVFGQMDEPPGTRMRVALSALTMAEYFRDEKQQDVLLFIDNIFRFTQAGSEVSTLLGRMPSAVGYQPTLADEMGELQERITSTRGRSITSMQAVYVPADDYTDPAPATTFAHLDATTELSRSVFSKGIFPAVDPLASSSTILDPSVVGDEHYRVAQEVIRILQRYKDLQDIIAILGIDELAEEDKQLVQRARRIERFLSQNMMAAEQFTGQPGSTVPLKETIEAFDKLSKGDFDHLPEQAFFLIGGLEDLQRKAESLGAKMEDTSGDGAPAQSDSKSDSKGDDADKDA.

167–174 (GGAGVGKT) lines the ATP pocket. Positions 476 to 509 (ESLGAKMEDTSGDGAPAQSDSKSDSKGDDADKDA) are disordered. The span at 496–509 (SKSDSKGDDADKDA) shows a compositional bias: basic and acidic residues.

Belongs to the ATPase alpha/beta chains family. As to quaternary structure, F-type ATPases have 2 components, CF(1) - the catalytic core - and CF(0) - the membrane proton channel. CF(1) has five subunits: alpha(3), beta(3), gamma(1), delta(1), epsilon(1). CF(0) has three main subunits: a(1), b(2) and c(9-12). The alpha and beta chains form an alternating ring which encloses part of the gamma chain. CF(1) is attached to CF(0) by a central stalk formed by the gamma and epsilon chains, while a peripheral stalk is formed by the delta and b chains.

The protein localises to the cell membrane. The catalysed reaction is ATP + H2O + 4 H(+)(in) = ADP + phosphate + 5 H(+)(out). Produces ATP from ADP in the presence of a proton gradient across the membrane. The catalytic sites are hosted primarily by the beta subunits. The protein is ATP synthase subunit beta of Mycobacterium sp. (strain KMS).